Consider the following 485-residue polypeptide: Dual specificity protein phosphatase CDC14B (485 aa).

Positions 1-38 (MKRKSERRSAWATAPPCSRRSSSSSPGVKKSRSSTPQE) are disordered. The short motif at 1 to 54 (MKRKSERRSAWATAPPCSRRSSSSSPGVKKSRSSTPQELHRLEQQDDLYLDITD) is the Nucleolar localization signal element. Residues 15-28 (PPCSRRSSSSSPGV) show a composition bias toward low complexity. The a stretch occupies residues 44–198 (QQDDLYLDIT…AMQYGFFNFN (155 aa)). The tract at residues 199 to 212 (SFNLDEYEHYEKAE) is linker. The interval 213 to 379 (NGDFNWIIPE…EGDYFRQKLR (167 aa)) is b. The Tyrosine-protein phosphatase domain occupies 215 to 374 (DFNWIIPERF…SSLWLEGDYF (160 aa)). The active-site Phosphocysteine intermediate is cysteine 314. Residues 402 to 424 (LNGLENQDNQEPEPYSDDDEVSG) are disordered. Over residues 409–422 (DNQEPEPYSDDDEV) the composition is skewed to acidic residues.

The protein belongs to the protein-tyrosine phosphatase family. Non-receptor class CDC14 subfamily. In terms of assembly, interacts with FZR1/CDH1.

The protein localises to the nucleus. The protein resides in the nucleolus. Its subcellular location is the nucleoplasm. It catalyses the reaction O-phospho-L-tyrosyl-[protein] + H2O = L-tyrosyl-[protein] + phosphate. It carries out the reaction O-phospho-L-seryl-[protein] + H2O = L-seryl-[protein] + phosphate. The enzyme catalyses O-phospho-L-threonyl-[protein] + H2O = L-threonyl-[protein] + phosphate. Functionally, dual-specificity phosphatase involved in DNA damage response. Essential regulator of the G2 DNA damage checkpoint: following DNA damage, translocates to the nucleus and dephosphorylates FZR1/CDH1, a key activator of the anaphase promoting complex/cyclosome (APC/C). Dephosphorylates SIRT2 around early anaphase. Dephosphorylation of FZR1/CDH1 activates the APC/C, leading to the ubiquitination of PLK1, preventing entry into mitosis. Preferentially dephosphorylates proteins modified by proline-directed kinases. This Mus musculus (Mouse) protein is Dual specificity protein phosphatase CDC14B (Cdc14b).